Here is a 776-residue protein sequence, read N- to C-terminus: Chitin synthase 1 (776 aa).

Helical transmembrane passes span 451-471 (LVSLLFSFFSLSNFYLTFYFL), 487-507 (FWIFTLFNYLCIGVLTSLFIV), 523-543 (LIILLTICALYALVVGFVFVI), 558-578 (VLVSIVVSLLSTYGLYTLMSI), 695-714 (VVLFWMIANLVFIMTMVQVY), and 723-743 (IYLAFILWAVAVLALVRAIGS).

This sequence belongs to the chitin synthase family.

Its subcellular location is the cell membrane. It catalyses the reaction [(1-&gt;4)-N-acetyl-beta-D-glucosaminyl](n) + UDP-N-acetyl-alpha-D-glucosamine = [(1-&gt;4)-N-acetyl-beta-D-glucosaminyl](n+1) + UDP + H(+). With respect to regulation, requires proteolytic activation. In terms of biological role, polymerizes chitin, a structural polymer of the cell wall and septum, by transferring the sugar moiety of UDP-GlcNAc to the non-reducing end of the growing chitin polymer. Also involved in forming cross walls in the hyphal phase. The sequence is that of Chitin synthase 1 (CHS1) from Candida albicans (Yeast).